We begin with the raw amino-acid sequence, 343 residues long: F-box/kelch-repeat protein At3g08810 (343 aa).

Residues 1–15 (MSYPERKRKRSRWSK) show a composition bias toward basic residues. The disordered stretch occupies residues 1–25 (MSYPERKRKRSRWSKPHSTQNPSPS). The F-box domain occupies 20–66 (QNPSPSLPDDVLLSIFARVSRLYYPTLSHVSESFRSLLASPELYKAR). 3 Kelch repeats span residues 134-181 (DIYN…VRDG), 183-224 (QGGH…LPDS), and 225-271 (YCVI…VILA).

This Arabidopsis thaliana (Mouse-ear cress) protein is F-box/kelch-repeat protein At3g08810.